The sequence spans 317 residues: MYTKIIGTGSYLPEQVRTNADLEKMVDTSDEWIVTRTGIRERHIAAQNETVSTMGFEAATRAIEMAGIEKDQIGLIVVATTSATHAFPSAACQIQSMLGIKGCPAFDVAAACAGFTYALSVADQYVKSGAVKYALVVGSDVLARTCDPTDRGTIIIFGDGAGAAVLAASEEPGIISTHLHADGSYGELLTLPNADRVNPENSIHLTMAGNEVFKVAVTELAHIVDETLAANNLDRSQLDWLVPHQANLRIISATAKKLGMSMDNVVVTLDRHGNTSAASVPCALDEAVRDGRIKPGQLVLLEAFGGGFTWGSALVRF.

Catalysis depends on residues Cys112 and His244. Positions Gln245–Arg249 are ACP-binding. Asn274 is a catalytic residue.

The protein belongs to the thiolase-like superfamily. FabH family. In terms of assembly, homodimer.

The protein localises to the cytoplasm. The enzyme catalyses malonyl-[ACP] + acetyl-CoA + H(+) = 3-oxobutanoyl-[ACP] + CO2 + CoA. It participates in lipid metabolism; fatty acid biosynthesis. Catalyzes the condensation reaction of fatty acid synthesis by the addition to an acyl acceptor of two carbons from malonyl-ACP. Catalyzes the first condensation reaction which initiates fatty acid synthesis and may therefore play a role in governing the total rate of fatty acid production. Possesses both acetoacetyl-ACP synthase and acetyl transacylase activities. Its substrate specificity determines the biosynthesis of branched-chain and/or straight-chain of fatty acids. This chain is Beta-ketoacyl-[acyl-carrier-protein] synthase III, found in Escherichia coli O9:H4 (strain HS).